The primary structure comprises 468 residues: MTATPWSARFEAGLHPTVAAFNASIGFDIELIEYDLSGSAAHARMLAHSGILSEAEAEALVGGLEQIRSEWRTGQFRPGLEQEDVHYAVERRLVELVGEVGKKLHTARSRNDQVGTDLRLWLRERIDRIVGRLGVFQRTLLDLAACHVETLIPGYTHLQRAQPVSLAHHLLAYIEMGERDIERLTQIRERVNVCPLGSGALAGTVLPIDRHYTARLLGFVALSENSLDAVSDRDYVVEFLAAASLIAVHLSRLSEEIILWASQEFRFLTLTDRCATGSSLMPQKKNPDVPELVRGKTGRIFGHLMGMLTVLKGLPLAYNKDLQEDKEGIFDAARSVESSLEAMTILMAEGIVFQPDRLAGAVEEDFSNATDAADYLVRKGVPFREAYGVIGAVVKHCLKSNALLRDLPIAQWRHFHPAFDDDLYAAITPRTVVAARNSYGGTGFEQVRAALGRAEARWQGHFPSASAH.

The protein belongs to the lyase 1 family. Argininosuccinate lyase subfamily.

The protein localises to the cytoplasm. It carries out the reaction 2-(N(omega)-L-arginino)succinate = fumarate + L-arginine. It participates in amino-acid biosynthesis; L-arginine biosynthesis; L-arginine from L-ornithine and carbamoyl phosphate: step 3/3. This is Argininosuccinate lyase from Gloeobacter violaceus (strain ATCC 29082 / PCC 7421).